The sequence spans 296 residues: MNKEQLEKMTHGKGFIAALDQSGGSTPKALKEYGVNEDQYSNEDEMFQLVHDMRTRVVTSPSFSPDKILGAILFEQTMDREVEGKYTGDYLADKGVVPFLKVDKGLAEEKNGVQLMKPIDDLDATLNRANERHIFGTKMRSNILELNEQGIKDVVEQQFEFAKKIIAKGLVPIIEPEVNINAKDKSEIEKVLKAEIKKGLDSLNDDQLVMLKLTIPTEANLYKDLADHPNVVRVVVLSGGYSRDEANKLLKDNDELIASFSRALASDLRASQSQEEFDKALGDAVDSIYDASVNKN.

Glu175 serves as the catalytic Proton acceptor. Lys212 functions as the Schiff-base intermediate with dihydroxyacetone-P in the catalytic mechanism.

The protein belongs to the class I fructose-bisphosphate aldolase family.

It catalyses the reaction beta-D-fructose 1,6-bisphosphate = D-glyceraldehyde 3-phosphate + dihydroxyacetone phosphate. It participates in carbohydrate degradation; glycolysis; D-glyceraldehyde 3-phosphate and glycerone phosphate from D-glucose: step 4/4. This is Fructose-bisphosphate aldolase class 1 from Staphylococcus epidermidis (strain ATCC 35984 / DSM 28319 / BCRC 17069 / CCUG 31568 / BM 3577 / RP62A).